A 126-amino-acid polypeptide reads, in one-letter code: MYAENYKRLEQLIDKLREFNGVILVEGMRDEVALRKLGVETEIIKLSRFPLAEIALTASHYHDIMILTDFDRKGEDLAKKLTQYLEGYKCRVDTNTRRELKKIAKKDIKGIEDLYGLYLRFKSLRF.

The region spanning 20-100 is the Toprim domain; sequence NGVILVEGMR…RVDTNTRREL (81 aa). Residues E26, D69, and D71 each contribute to the Mg(2+) site.

It belongs to the UPF0292 family. Mg(2+) serves as cofactor.

The protein is UPF0292 protein TSIB_0423 of Thermococcus sibiricus (strain DSM 12597 / MM 739).